Consider the following 572-residue polypeptide: Alpha-1D adrenergic receptor (572 aa).

The segment at 1–77 (MTFRDLLSVS…SAGEPGSAGA (77 aa)) is disordered. The Extracellular segment spans residues 1–95 (MTFRDLLSVS…AVGGLVVSAQ (95 aa)). 2 stretches are compositionally biased toward gly residues: residues 23–33 (SSAGGGGGSAG) and 42–61 (AVGG…GAGS). N-linked (GlcNAc...) asparagine glycans are attached at residues Asn-65 and Asn-82. A helical membrane pass occupies residues 96-121 (GVGVGVFLAAFILMAVAGNLLVILSV). Residues 122–133 (ACNRHLQTVTNY) are Cytoplasmic-facing. The chain crosses the membrane as a helical span at residues 134 to 159 (FIVNLAVADLLLSATVLPFSATMEVL). Over 160 to 169 (GFWAFGRAFC) the chain is Extracellular. Residues 170 to 192 (DVWAAVDVLCCTASILSLCTISV) traverse the membrane as a helical segment. At 193–213 (DRYVGVRHSLKYPAIMTERKA) the chain is on the cytoplasmic side. A helical membrane pass occupies residues 214–238 (AAILALLWVVALVVSVGPLLGWKEP). The Extracellular segment spans residues 239–251 (VPPDERFCGITEE). Residues 252-275 (AGYAVFSSVCSFYLPMAVIVVMYC) traverse the membrane as a helical segment. The Cytoplasmic segment spans residues 276 to 348 (RVYVVARSTT…KFSREKKAAK (73 aa)). Residues 349–373 (TLAIVVGVFVLCWFPFFFVLPLGSL) traverse the membrane as a helical segment. At 374–380 (FPQLKPS) the chain is on the extracellular side. The chain crosses the membrane as a helical span at residues 381–405 (EGVFKVIFWLGYFNSCVNPLIYPCS). The Cytoplasmic portion of the chain corresponds to 406-572 (SREFKRAFLR…DYSNLRETDI (167 aa)). The S-palmitoyl cysteine moiety is linked to residue Cys-419. Residues 444 to 488 (GLRQDCAPSSGDAPPGAPLALTALPDPDPEPPGTPEMQAPVASRR) are disordered. A compositionally biased stretch (low complexity) spans 450 to 468 (APSSGDAPPGAPLALTALP).

Belongs to the G-protein coupled receptor 1 family. Adrenergic receptor subfamily. ADRA1D sub-subfamily. As to quaternary structure, interacts with FLNA (via filamin repeat 21); increases PKA-mediated phosphorylation of FLNA. In terms of processing, palmitoylated. Palmitoylation by ZDHHC21 may increase the expression of the receptor and regulate downstream signaling.

It localises to the cell membrane. Functionally, this alpha-adrenergic receptor mediates its effect through the influx of extracellular calcium. The sequence is that of Alpha-1D adrenergic receptor (ADRA1D) from Homo sapiens (Human).